A 228-amino-acid polypeptide reads, in one-letter code: Claudin-10 (228 aa).

Residues Met1–Val21 form a helical membrane-spanning segment. Topologically, residues Ser22–Arg80 are extracellular. A helical transmembrane segment spans residues Gly81–Met101. At Lys102–Lys115 the chain is on the cytoplasmic side. The helical transmembrane segment at Ile116–Ser136 threads the bilayer. The Extracellular segment spans residues Leu137–Ala160. Residues Ala161–Phe181 traverse the membrane as a helical segment. Over Ser182 to Val228 the chain is Cytoplasmic.

Belongs to the claudin family. As to quaternary structure, can form homodimers both in trans (interaction between CLDN10 molecules in opposing membranes) and in cis (interaction between CLDN10 molecules within one membrane). Interacts with CLDN19.

The protein localises to the cell junction. Its subcellular location is the tight junction. It localises to the cell membrane. The catalysed reaction is Na(+)(in) = Na(+)(out). The enzyme catalyses Li(+)(in) = Li(+)(out). It catalyses the reaction K(+)(in) = K(+)(out). It carries out the reaction Rb(+)(in) = Rb(+)(out). The catalysed reaction is Cs(+)(in) = Cs(+)(out). The enzyme catalyses NH4(+)(in) = NH4(+)(out). It catalyses the reaction methylamine(out) = methylamine(in). It carries out the reaction Mg(2+)(in) = Mg(2+)(out). The catalysed reaction is Ca(2+)(in) = Ca(2+)(out). The enzyme catalyses Sr(2+)(in) = Sr(2+)(out). It catalyses the reaction chloride(in) = chloride(out). It carries out the reaction nitrate(in) = nitrate(out). Functionally, forms paracellular channels: polymerizes in tight junction strands with cation- and anion-selective channels through the strands, conveying epithelial permeability in a process known as paracellular tight junction permeability. In sweat glands and in the thick ascending limb (TAL) of Henle's loop in kidney, it controls paracellular sodium permeability which is essential for proper sweat production and renal function. In renal proximal tubules, it conveys selective chloride over hydrogencarbonate anion permeability which is required for renal chloride reabsorption and salt homeostasis. The chain is Claudin-10 (CLDN10) from Pongo abelii (Sumatran orangutan).